The sequence spans 460 residues: Minor capsid protein L2 (460 aa).

The Nuclear localization signal signature appears at 1–12 (MAHSRARRRKRA). Residues Cys21 and Cys27 are joined by a disulfide bond. A Nuclear localization signal motif is present at residues 443–451 (FARKRRKRV).

This sequence belongs to the papillomaviridae L2 protein family. As to quaternary structure, interacts with major capsid protein L1. Interacts with E2; this interaction inhibits E2 transcriptional activity but not the DNA replication function E2. Interacts with host GADD45GIP1. Interacts with host HSPA8; this interaction is required for L2 nuclear translocation. Interacts with host importins KPNB2 and KPNB3. Forms a complex with importin alpha2-beta1 heterodimers via interaction with the importin alpha2 adapter. Interacts with host DYNLT1; this interaction is essential for virus intracellular transport during entry. Interacts (via C-terminus) with host retromer subunits VPS35 and VPS29. In terms of processing, highly phosphorylated.

It is found in the virion. The protein localises to the host nucleus. The protein resides in the host early endosome. Its subcellular location is the host Golgi apparatus. Minor protein of the capsid that localizes along the inner surface of the virion, within the central cavities beneath the L1 pentamers. Plays a role in capsid stabilization through interaction with the major capsid protein L1. Once the virion enters the host cell, L2 escorts the genomic DNA into the nucleus by promoting escape from the endosomal compartments and traffic through the host Golgi network. Mechanistically, the C-terminus of L2 possesses a cell-penetrating peptide that protudes from the host endosome, interacts with host cytoplasmic retromer cargo and thereby mediates the capsid delivery to the host trans-Golgi network. Plays a role through its interaction with host dynein in the intracellular microtubule-dependent transport of viral capsid toward the nucleus. Mediates the viral genome import into the nucleus through binding to host importins. Once within the nucleus, L2 localizes viral genomes to host PML bodies in order to activate early gene expression for establishment of infection. Later on, promotes late gene expression by interacting with the viral E2 protein and by inhibiting its transcriptional activation functions. During virion assembly, encapsidates the genome by direct interaction with the viral DNA. This is Minor capsid protein L2 from Human papillomavirus 44.